A 381-amino-acid polypeptide reads, in one-letter code: Queuine tRNA-ribosyltransferase (381 aa).

Residue Asp-96 is the Proton acceptor of the active site. Residues 96–100 (DSGGF), Asp-150, Gln-193, and Gly-220 contribute to the substrate site. An RNA binding region spans residues 251-257 (GVGAPDS). Catalysis depends on Asp-270, which acts as the Nucleophile. The interval 275 to 279 (TRIAR) is RNA binding; important for wobble base 34 recognition. Zn(2+) contacts are provided by Cys-308, Cys-310, Cys-313, and His-339.

It belongs to the queuine tRNA-ribosyltransferase family. As to quaternary structure, homodimer. Within each dimer, one monomer is responsible for RNA recognition and catalysis, while the other monomer binds to the replacement base PreQ1. It depends on Zn(2+) as a cofactor.

The catalysed reaction is 7-aminomethyl-7-carbaguanine + guanosine(34) in tRNA = 7-aminomethyl-7-carbaguanosine(34) in tRNA + guanine. Its pathway is tRNA modification; tRNA-queuosine biosynthesis. In terms of biological role, catalyzes the base-exchange of a guanine (G) residue with the queuine precursor 7-aminomethyl-7-deazaguanine (PreQ1) at position 34 (anticodon wobble position) in tRNAs with GU(N) anticodons (tRNA-Asp, -Asn, -His and -Tyr). Catalysis occurs through a double-displacement mechanism. The nucleophile active site attacks the C1' of nucleotide 34 to detach the guanine base from the RNA, forming a covalent enzyme-RNA intermediate. The proton acceptor active site deprotonates the incoming PreQ1, allowing a nucleophilic attack on the C1' of the ribose to form the product. After dissociation, two additional enzymatic reactions on the tRNA convert PreQ1 to queuine (Q), resulting in the hypermodified nucleoside queuosine (7-(((4,5-cis-dihydroxy-2-cyclopenten-1-yl)amino)methyl)-7-deazaguanosine). The chain is Queuine tRNA-ribosyltransferase from Enterococcus faecalis (strain ATCC 700802 / V583).